Consider the following 256-residue polypeptide: 1-(5-phosphoribosyl)-5-[(5-phosphoribosylamino)methylideneamino] imidazole-4-carboxamide isomerase (256 aa).

Asp-8 serves as the catalytic Proton acceptor. Asp-130 acts as the Proton donor in catalysis.

This sequence belongs to the HisA/HisF family.

Its subcellular location is the cytoplasm. It catalyses the reaction 1-(5-phospho-beta-D-ribosyl)-5-[(5-phospho-beta-D-ribosylamino)methylideneamino]imidazole-4-carboxamide = 5-[(5-phospho-1-deoxy-D-ribulos-1-ylimino)methylamino]-1-(5-phospho-beta-D-ribosyl)imidazole-4-carboxamide. It functions in the pathway amino-acid biosynthesis; L-histidine biosynthesis; L-histidine from 5-phospho-alpha-D-ribose 1-diphosphate: step 4/9. This chain is 1-(5-phosphoribosyl)-5-[(5-phosphoribosylamino)methylideneamino] imidazole-4-carboxamide isomerase, found in Pelodictyon phaeoclathratiforme (strain DSM 5477 / BU-1).